We begin with the raw amino-acid sequence, 215 residues long: Glutathione S-transferase F10 (215 aa).

Residues 2–81 (VLTIYAPLFA…YIAEKYRSQG (80 aa)) enclose the GST N-terminal domain. Residues 11–12 (AS), 39–40 (QR), 52–53 (KI), and 65–66 (ES) each bind glutathione. In terms of domain architecture, GST C-terminal spans 88–215 (TIEERGQVEQ…EVSAKYSLPV (128 aa)).

The protein belongs to the GST superfamily. Phi family. In terms of assembly, interacts with BAK1. In terms of tissue distribution, expressed in roots, stems, floral buds, mature flowers and leaves.

It is found in the cytoplasm. The protein localises to the cytosol. It carries out the reaction RX + glutathione = an S-substituted glutathione + a halide anion + H(+). Functionally, in vitro, possesses glutathione S-transferase activity toward 1-chloro-2,4-dinitrobenzene (CDNB) and benzyl isothiocyanate (BITC). May be involved in the conjugation of reduced glutathione to a wide number of exogenous and endogenous hydrophobic electrophiles and have a detoxification role against certain herbicides. In Arabidopsis thaliana (Mouse-ear cress), this protein is Glutathione S-transferase F10.